A 197-amino-acid chain; its full sequence is Small ribosomal subunit protein uS4 (197 aa).

The 65-residue stretch at 94–158 (RRLDNVIYRF…LKKYLYDYKN (65 aa)) folds into the S4 RNA-binding domain.

It belongs to the universal ribosomal protein uS4 family. Part of the 30S ribosomal subunit. Contacts protein S5. The interaction surface between S4 and S5 is involved in control of translational fidelity.

One of the primary rRNA binding proteins, it binds directly to 16S rRNA where it nucleates assembly of the body of the 30S subunit. In terms of biological role, with S5 and S12 plays an important role in translational accuracy. The protein is Small ribosomal subunit protein uS4 (rpsD) of Carsonella ruddii (strain PV).